The primary structure comprises 367 residues: Putative F-box protein At3g21130 (367 aa).

Residues 4–50 (KRNTVYLSEDLIVEILSRVSAVSLARLRTTSKRWNALVKDERLAKKH) form the F-box domain.

The chain is Putative F-box protein At3g21130 from Arabidopsis thaliana (Mouse-ear cress).